We begin with the raw amino-acid sequence, 106 residues long: Nucleoid-associated protein XCV1128 (106 aa).

Residues 81-106 (IDAESKDRMGSATAGMQLPPGMKLPF) are disordered.

This sequence belongs to the YbaB/EbfC family. As to quaternary structure, homodimer.

It is found in the cytoplasm. Its subcellular location is the nucleoid. Binds to DNA and alters its conformation. May be involved in regulation of gene expression, nucleoid organization and DNA protection. In Xanthomonas euvesicatoria pv. vesicatoria (strain 85-10) (Xanthomonas campestris pv. vesicatoria), this protein is Nucleoid-associated protein XCV1128.